Here is a 232-residue protein sequence, read N- to C-terminus: LexA repressor (232 aa).

Residues 1–25 (MSDDSSDSTSGAGSGRGRDSGLTER) form a disordered region. Positions 16–25 (RGRDSGLTER) are enriched in basic and acidic residues. The segment at residues 46 to 66 (IREIGDAVGLTSTSSVAHQLR) is a DNA-binding region (H-T-H motif). Residues serine 156 and lysine 193 each act as for autocatalytic cleavage activity in the active site.

It belongs to the peptidase S24 family. Homodimer.

It carries out the reaction Hydrolysis of Ala-|-Gly bond in repressor LexA.. Functionally, represses a number of genes involved in the response to DNA damage (SOS response), including recA and lexA. In the presence of single-stranded DNA, RecA interacts with LexA causing an autocatalytic cleavage which disrupts the DNA-binding part of LexA, leading to derepression of the SOS regulon and eventually DNA repair. This chain is LexA repressor, found in Mycolicibacterium vanbaalenii (strain DSM 7251 / JCM 13017 / BCRC 16820 / KCTC 9966 / NRRL B-24157 / PYR-1) (Mycobacterium vanbaalenii).